Reading from the N-terminus, the 366-residue chain is 4-hydroxy-3-methylbut-2-en-1-yl diphosphate synthase (flavodoxin) (366 aa).

[4Fe-4S] cluster-binding residues include C270, C273, C305, and E312.

It belongs to the IspG family. [4Fe-4S] cluster is required as a cofactor.

The enzyme catalyses (2E)-4-hydroxy-3-methylbut-2-enyl diphosphate + oxidized [flavodoxin] + H2O + 2 H(+) = 2-C-methyl-D-erythritol 2,4-cyclic diphosphate + reduced [flavodoxin]. Its pathway is isoprenoid biosynthesis; isopentenyl diphosphate biosynthesis via DXP pathway; isopentenyl diphosphate from 1-deoxy-D-xylulose 5-phosphate: step 5/6. Its function is as follows. Converts 2C-methyl-D-erythritol 2,4-cyclodiphosphate (ME-2,4cPP) into 1-hydroxy-2-methyl-2-(E)-butenyl 4-diphosphate. The sequence is that of 4-hydroxy-3-methylbut-2-en-1-yl diphosphate synthase (flavodoxin) from Wigglesworthia glossinidia brevipalpis.